Consider the following 39-residue polypeptide: Cytochrome b559 subunit beta (39 aa).

The helical transmembrane segment at 14–30 threads the bilayer; that stretch reads WLAVHGLAIPTVSFLGS. Residue His18 coordinates heme.

Belongs to the PsbE/PsbF family. Heterodimer of an alpha subunit and a beta subunit. PSII is composed of 1 copy each of membrane proteins PsbA, PsbB, PsbC, PsbD, PsbE, PsbF, PsbH, PsbI, PsbJ, PsbK, PsbL, PsbM, PsbT, PsbX, PsbY, PsbZ, Psb30/Ycf12, at least 3 peripheral proteins of the oxygen-evolving complex and a large number of cofactors. It forms dimeric complexes. Requires heme b as cofactor.

The protein localises to the plastid. It is found in the chloroplast thylakoid membrane. This b-type cytochrome is tightly associated with the reaction center of photosystem II (PSII). PSII is a light-driven water:plastoquinone oxidoreductase that uses light energy to abstract electrons from H(2)O, generating O(2) and a proton gradient subsequently used for ATP formation. It consists of a core antenna complex that captures photons, and an electron transfer chain that converts photonic excitation into a charge separation. In Beta vulgaris (Sugar beet), this protein is Cytochrome b559 subunit beta.